A 308-amino-acid polypeptide reads, in one-letter code: MAKHQSVLLHESIKGLAIKADGIYFDGTFGRGGHSREILNHLSDKGRLFAIDKDLDAVQYAKDYFGLDKRFQIFHGSFAQIKEFASQAGVIGAVDGILLDLGVSSPQLDNPERGFSFMLQGPLDMRMDLTQSINAANFVNEAEVNELAHVFRAYGEERFAGRIAKAIVDARKLKPITTTLELAEIVKEANPKWEKHKHPATRVFQAIRIHVNQELTDLSNCLEQCLDVLGPRGRLAVISFHSLEDRIVKQFMRDKEQGNRPPVEVPIKYEELKTNFKRVGKAVKPQSSEIKENVRSRSAVLRIGEKLA.

S-adenosyl-L-methionine contacts are provided by residues 32 to 34 (GGH), Asp-52, Phe-78, Asp-100, and Gln-107.

It belongs to the methyltransferase superfamily. RsmH family.

Its subcellular location is the cytoplasm. It carries out the reaction cytidine(1402) in 16S rRNA + S-adenosyl-L-methionine = N(4)-methylcytidine(1402) in 16S rRNA + S-adenosyl-L-homocysteine + H(+). Its function is as follows. Specifically methylates the N4 position of cytidine in position 1402 (C1402) of 16S rRNA. The sequence is that of Ribosomal RNA small subunit methyltransferase H from Legionella pneumophila (strain Corby).